A 482-amino-acid chain; its full sequence is Membrane-bound lytic murein transglycosylase F (482 aa).

Residues 1–18 (MKGLFLRIITALALLFWA) form the signal peptide. The interval 19–267 (IDMVFPWQFL…NLKEKYLGHI (249 aa)) is non-LT domain. Residues 268–482 (SQFDYVDTRS…NLEEIKENED (215 aa)) form an LT domain region. The active site involves Glu-312. Residues 457–470 (ENQTTNDNANNESA) are compositionally biased toward polar residues. A disordered region spans residues 457 to 482 (ENQTTNDNANNESAVKNLEEIKENED). Positions 473–482 (NLEEIKENED) are enriched in basic and acidic residues.

In the N-terminal section; belongs to the bacterial solute-binding protein 3 family. This sequence in the C-terminal section; belongs to the transglycosylase Slt family.

The protein resides in the cell outer membrane. The enzyme catalyses Exolytic cleavage of the (1-&gt;4)-beta-glycosidic linkage between N-acetylmuramic acid (MurNAc) and N-acetylglucosamine (GlcNAc) residues in peptidoglycan, from either the reducing or the non-reducing ends of the peptidoglycan chains, with concomitant formation of a 1,6-anhydrobond in the MurNAc residue.. Functionally, murein-degrading enzyme that degrades murein glycan strands and insoluble, high-molecular weight murein sacculi, with the concomitant formation of a 1,6-anhydromuramoyl product. Lytic transglycosylases (LTs) play an integral role in the metabolism of the peptidoglycan (PG) sacculus. Their lytic action creates space within the PG sacculus to allow for its expansion as well as for the insertion of various structures such as secretion systems and flagella. This Haemophilus influenzae (strain PittGG) protein is Membrane-bound lytic murein transglycosylase F.